A 595-amino-acid polypeptide reads, in one-letter code: Threonine dehydratase 2 biosynthetic, chloroplastic (595 aa).

The transit peptide at 1 to 51 (MEFLCLAPTRSFSTNPKLTKSIPSDHTSTTSRIFTYQNMRGSTMRPLALPL) directs the protein to the chloroplast. Position 143 is an N6-(pyridoxal phosphate)lysine (K143). ACT-like domains lie at 420 to 492 (ALLA…NLSH) and 514 to 585 (IFGE…LDNY).

It belongs to the serine/threonine dehydratase family. As to quaternary structure, homotetramer. Requires pyridoxal 5'-phosphate as cofactor. Post-translationally, proteolytically cleaved by a chymotrypsin-like digestive protease in the midgut of the lepidopteran insects to remove the C-terminal regulatory domain, which allows efficient metabolizing of threonine in the presence of high isoleucine levels in the gut. Expressed in floral buds, 8-9 mm long flowers 1 to 2 days before anthesis, open flowers and floral organs including sepals, petals, stamens and carpels of 8-9 mm flowers (at protein level). Expressed in very early floral meristems of the anantha. Over 500-fold expression in mature flowers compared to leaves. Expressed in sepals, petals, stamens and carpels of the mature flower. In sepals, mostly expressed in the abaxial mesophyll cells and in petals in parenchymal cells. Not expressed in epidermal or vascular tissues of sepals and petals. In stamens, expressed in parenchymal cells of the connective and lobes, but not expressed in differentiated tissues such as tapetum (TP), stomium (SM), or pollen grains (PG). Not expressed in roots or seeds. High level of expression in immature flower buds, unopened flowers and opened flowers. Not expressed in unstressed leaves, root, stem or petiole.

The protein localises to the plastid. Its subcellular location is the chloroplast. It catalyses the reaction L-threonine = 2-oxobutanoate + NH4(+). It carries out the reaction L-serine = pyruvate + NH4(+). It functions in the pathway amino-acid biosynthesis; L-isoleucine biosynthesis; 2-oxobutanoate from L-threonine: step 1/1. Threonine dehydratase 2 biosynthetic, chloroplastic: Strongly inhibited by 1 mM isoleucine. Processed threonine dehydratase 2: Not inhibited by isoleucine. Its function is as follows. Not required for normal growth and development of the plant. Involved in defense against lepidopteran, but not coleopteran herbivore insects. Acts in the insect gut to degrade threonine, which is an essential and limiting nutrient for the growth of lepidopteran larvae. Active against both L-threonine and L-serine. The sequence is that of Threonine dehydratase 2 biosynthetic, chloroplastic from Solanum lycopersicum (Tomato).